Reading from the N-terminus, the 552-residue chain is NADH-ubiquinone oxidoreductase chain 5 (552 aa).

Helical transmembrane passes span 11–31 (PVTI…PFGL), 36–56 (LAMT…AYAI), 68–88 (FYII…SDNY), 89–109 (LMMF…ISFW), 121–141 (SAIL…GLMI), 152–172 (IALV…LLLL), 196–216 (TPVS…YVLV), 229–249 (LLII…IAIV), 256–274 (VIAL…AIGI), 287–307 (HAFF…SFVA), 322–342 (LPFS…IPGL), 365–386 (ILYY…RVLY), 406–426 (SLGM…IGYS), 453–473 (AYIK…LVYV), and 532–552 (SRAV…LFFI).

The protein belongs to the complex I subunit 5 family.

Its subcellular location is the mitochondrion inner membrane. It carries out the reaction a ubiquinone + NADH + 5 H(+)(in) = a ubiquinol + NAD(+) + 4 H(+)(out). In terms of biological role, core subunit of the mitochondrial membrane respiratory chain NADH dehydrogenase (Complex I) that is believed to belong to the minimal assembly required for catalysis. Complex I functions in the transfer of electrons from NADH to the respiratory chain. The immediate electron acceptor for the enzyme is believed to be ubiquinone. The chain is NADH-ubiquinone oxidoreductase chain 5 (NAD5) from Candida albicans (strain SC5314 / ATCC MYA-2876) (Yeast).